Consider the following 416-residue polypeptide: Adenylosuccinate synthetase (416 aa).

GTP-binding positions include Gly13–Lys19 and Gly41–Thr43. Asp14 (proton acceptor) is an active-site residue. Mg(2+) is bound by residues Asp14 and Gly41. Residues Asp14–Lys17, Asn39–His42, Thr126, Arg140, Gln220, Thr235, and Arg299 each bind IMP. The Proton donor role is filled by His42. A substrate-binding site is contributed by Val295–Arg301. GTP-binding positions include Arg301, Lys327 to Asp329, and Ser405 to Ser407.

It belongs to the adenylosuccinate synthetase family. As to quaternary structure, homodimer. It depends on Mg(2+) as a cofactor.

It is found in the cytoplasm. The enzyme catalyses IMP + L-aspartate + GTP = N(6)-(1,2-dicarboxyethyl)-AMP + GDP + phosphate + 2 H(+). It participates in purine metabolism; AMP biosynthesis via de novo pathway; AMP from IMP: step 1/2. Its function is as follows. Plays an important role in the de novo pathway of purine nucleotide biosynthesis. Catalyzes the first committed step in the biosynthesis of AMP from IMP. In Campylobacter jejuni subsp. jejuni serotype O:2 (strain ATCC 700819 / NCTC 11168), this protein is Adenylosuccinate synthetase.